Consider the following 274-residue polypeptide: Copper chaperone for superoxide dismutase (274 aa).

Residues 11 to 74 (VCALEFAVQM…LLESTGRQAV (64 aa)) enclose the HMA domain. Residues Cys22 and Cys25 each contribute to the Cu cation site. A Glycyl lysine isopeptide (Lys-Gly) (interchain with G-Cter in ubiquitin) cross-link involves residue Lys76. The tract at residues 88–234 (AAVAILEGCG…LACGIIARSA (147 aa)) is superoxide dismutase-like. Cys141 and Cys227 are oxidised to a cystine. Residues His147, His155, His164, and Asp167 each contribute to the Zn(2+) site. Glycyl lysine isopeptide (Lys-Gly) (interchain with G-Cter in ubiquitin) cross-links involve residues Lys189, Lys216, and Lys241. Residues Cys244 and Cys246 each coordinate Cu cation. Ser267 carries the post-translational modification Phosphoserine.

This sequence in the C-terminal section; belongs to the Cu-Zn superoxide dismutase family. Homodimer, and heterodimer with SOD1. Interacts with COMMD1. Interacts with XIAP/BIRC4. Interacts with SLC31A1(via C-terminal domain); this interaction is Cu(1+)-mediated. The heterodimer CCS:SOD1 interacts with SLC31A1; this heterotrimer is Cu(1+)-mediated and its maintenance is regulated through SOD1 activation. Cu(2+) is required as a cofactor. Zn(2+) serves as cofactor. In terms of processing, ubiquitinion by XIAP/BIRC4 leads to enhancement of its chaperone activity toward its physiologic target, SOD1, rather than proteasomal degradation. XIAP/BIRC4 preferentially ubiquitinates at Lys-241. In terms of tissue distribution, ubiquitous.

The protein localises to the cytoplasm. In terms of biological role, delivers copper to copper zinc superoxide dismutase (SOD1). This Mus musculus (Mouse) protein is Copper chaperone for superoxide dismutase.